Here is a 321-residue protein sequence, read N- to C-terminus: Torsin-2A (321 aa).

The signal sequence occupies residues 1–27 (MAVARHGCPPWGSILGLLVLALAAAAA). 93–100 (GWTGTGKS) contributes to the ATP binding site. A glycan (N-linked (GlcNAc...) asparagine) is linked at Asn-149.

Belongs to the ClpA/ClpB family. Torsin subfamily. As to quaternary structure, homohexamer. Interacts with TOR1AIP1.

It is found in the endoplasmic reticulum lumen. The protein is Torsin-2A (Tor2a) of Rattus norvegicus (Rat).